Reading from the N-terminus, the 138-residue chain is Small ribosomal subunit protein uS11c (138 aa).

A disordered region spans residues 1 to 23; the sequence is MAKPIQRIGSRRNGPIGSRKNGR.

The protein belongs to the universal ribosomal protein uS11 family. In terms of assembly, part of the 30S ribosomal subunit.

The protein localises to the plastid. Its subcellular location is the chloroplast. The chain is Small ribosomal subunit protein uS11c from Platanus occidentalis (Sycamore).